A 377-amino-acid polypeptide reads, in one-letter code: MGNILRCFKGDDDGGDHYPYYKPTSRPHYQPPHYHGQPAAPPAPPQQQPLGPHGVTPSTVGVAALAHDLLNFESTSMVPDGLSQHVVSSRKAQVKWYQKLLEAYKNTTPPPKTPADAAQLIARALNMIQRADLEITSNYVSPQGILEFYNFPIPSLPSASSNYQPSSLPEGVQFVLNTLPVYDKCIGDGDGFTAYVSTTDPRESANVPLEVHELVIARTQARKCRDYQSADALLSSLDEAGYKIISCSDDEVLARKYRIRMRGIDAPELKMPYGRESRNALVKLIGGKSVKIYVYDLDQFGRYVGDIYCNNLFIQEQMLKNGHAWHFKTYDKRPEFARWEREAKAANRGLWASGNPEKPWDWRRDQRNARQDAIQVY.

The N-myristoyl glycine moiety is linked to residue Gly-2. Residue Cys-7 is the site of S-palmitoyl cysteine attachment. The tract at residues 15–57 (GDHYPYYKPTSRPHYQPPHYHGQPAAPPAPPQQQPLGPHGVTP) is disordered. The span at 27 to 38 (PHYQPPHYHGQP) shows a compositional bias: low complexity. Residues 177–353 (NTLPVYDKCI…KAANRGLWAS (177 aa)) enclose the TNase-like domain. Asp-190 is a binding site for Ca(2+). The active site involves Arg-260. Position 265 (Asp-265) interacts with Ca(2+). Active-site residues include Glu-268 and Arg-302.

The protein belongs to the thermonuclease family. It depends on Ca(2+) as a cofactor.

It localises to the cell membrane. Functionally, enzyme that catalyzes the hydrolysis of both DNA and RNA at the 5' position of the phosphodiester bond. The sequence is that of Probable staphylococcal-like nuclease CAN3 from Oryza sativa subsp. japonica (Rice).